Here is a 104-residue protein sequence, read N- to C-terminus: MIKSELVQRIAEHNPHLYQRDVENIVNAILDEIVDALARGDRVELRGFGAFSVKHRPARAGRNPRTGAHVPVDQKTVPFFKTGKEMRERLNRDSGDDAPTSDTA.

Basic and acidic residues predominate over residues 83 to 95; that stretch reads GKEMRERLNRDSG. The disordered stretch occupies residues 83 to 104; the sequence is GKEMRERLNRDSGDDAPTSDTA.

Belongs to the bacterial histone-like protein family. Heterodimer of an alpha and a beta chain.

In terms of biological role, this protein is one of the two subunits of integration host factor, a specific DNA-binding protein that functions in genetic recombination as well as in transcriptional and translational control. The protein is Integration host factor subunit beta of Rhodopseudomonas palustris (strain ATCC BAA-98 / CGA009).